A 309-amino-acid chain; its full sequence is Isopentenyl-diphosphate Delta-isomerase II (309 aa).

Substrate is bound at residue lysine 112. Mg(2+) contacts are provided by histidine 116 and histidine 128. A Nudix hydrolase domain is found at 126-278 (LLHRAFSVFL…GLKLSPWFRL (153 aa)). The substrate site is built by arginine 147 and lysine 151. Cysteine 163 is an active-site residue. Residue serine 164 participates in substrate binding. Positions 223 and 225 each coordinate Mg(2+). Residue glutamate 225 is part of the active site.

The protein belongs to the IPP isomerase type 1 family. Mg(2+) is required as a cofactor.

The enzyme catalyses isopentenyl diphosphate = dimethylallyl diphosphate. The protein operates within isoprenoid biosynthesis; dimethylallyl diphosphate biosynthesis; dimethylallyl diphosphate from isopentenyl diphosphate: step 1/1. It participates in porphyrin-containing compound metabolism; chlorophyll biosynthesis. Functionally, catalyzes the 1,3-allylic rearrangement of the homoallylic substrate isopentenyl (IPP) to its highly electrophilic allylic isomer, dimethylallyl diphosphate (DMAPP). The protein is Isopentenyl-diphosphate Delta-isomerase II (IPI2) of Camptotheca acuminata (Happy tree).